A 240-amino-acid polypeptide reads, in one-letter code: NADPH-flavin oxidoreductase (240 aa).

Residues 11 to 15 (HRSIR), Ser-39, 67 to 69 (QAY), 128 to 131 (YIGG), and 167 to 169 (KPR) each bind FMN.

The protein belongs to the flavin oxidoreductase frp family. Homodimer.

The catalysed reaction is FMNH2 + NADP(+) = FMN + NADPH + 2 H(+). Functionally, catalyzes the NADPH-dependent reduction of FMN to FMNH(2). Involved in bioluminescence by providing FMNH(2) to luciferase. The protein is NADPH-flavin oxidoreductase of Vibrio harveyi (Beneckea harveyi).